The primary structure comprises 684 residues: DNA ligase (684 aa).

NAD(+)-binding positions include Asp-48 to Asp-52, Ser-97 to Leu-98, and Glu-129. The active-site N6-AMP-lysine intermediate is the Lys-131. Positions 152, 189, 310, and 334 each coordinate NAD(+). Residues Cys-429, Cys-432, Cys-447, and Cys-452 each coordinate Zn(2+). The 76-residue stretch at Ala-609–Ile-684 folds into the BRCT domain.

It belongs to the NAD-dependent DNA ligase family. LigA subfamily. The cofactor is Mg(2+). It depends on Mn(2+) as a cofactor.

It catalyses the reaction NAD(+) + (deoxyribonucleotide)n-3'-hydroxyl + 5'-phospho-(deoxyribonucleotide)m = (deoxyribonucleotide)n+m + AMP + beta-nicotinamide D-nucleotide.. Its function is as follows. DNA ligase that catalyzes the formation of phosphodiester linkages between 5'-phosphoryl and 3'-hydroxyl groups in double-stranded DNA using NAD as a coenzyme and as the energy source for the reaction. It is essential for DNA replication and repair of damaged DNA. This Bdellovibrio bacteriovorus (strain ATCC 15356 / DSM 50701 / NCIMB 9529 / HD100) protein is DNA ligase.